Here is a 176-residue protein sequence, read N- to C-terminus: MLKDDMLEVALLGKTIGLKGAIKLHNRSDFPSQFKKGAKFYLTDGEILEILSFNKTNFVAVFKNYENIECAAKLTNKILYQSKEITKKTCKLGKDEFFYFEILGLEVFENEEKLGKVADIFEAGNFVFEIATDEKLIKKGFPKIFYLPYTDHFIDKISIEEGKIFSRFGFEILQNS.

The PRC barrel domain occupies 94–176 (KDEFFYFEIL…RFGFEILQNS (83 aa)).

Belongs to the RimM family. Binds ribosomal protein uS19.

The protein resides in the cytoplasm. An accessory protein needed during the final step in the assembly of 30S ribosomal subunit, possibly for assembly of the head region. Essential for efficient processing of 16S rRNA. May be needed both before and after RbfA during the maturation of 16S rRNA. It has affinity for free ribosomal 30S subunits but not for 70S ribosomes. This is Ribosome maturation factor RimM from Campylobacter hominis (strain ATCC BAA-381 / DSM 21671 / CCUG 45161 / LMG 19568 / NCTC 13146 / CH001A).